A 459-amino-acid chain; its full sequence is E3 ubiquitin-protein ligase RNF25 (459 aa).

One can recognise an RWD domain in the interval Ser-18 to Asn-128. 8 residues coordinate Zn(2+): Cys-135, Cys-138, Cys-153, His-155, His-158, Cys-161, Cys-198, and Cys-201. An RING-type zinc finger spans residues Cys-135–Arg-202. Disordered regions lie at residues Pro-268–Pro-309 and Thr-322–Ser-459. Positions Lys-282–Thr-303 are enriched in polar residues. Basic and acidic residues-rich tracts occupy residues Gln-349 to Gln-370, Pro-378 to Pro-389, Arg-413 to Lys-424, and Thr-446 to Ser-459. Phosphoserine is present on Ser-450.

Belongs to the RNF25 family. In terms of assembly, interacts with UBE2D2, and may also interact with UBE2E1 and UBE2E3. Interacts with RELA/p65. Ubiquitinated; autoubiquitinated.

The protein localises to the cytoplasm. The enzyme catalyses S-ubiquitinyl-[E2 ubiquitin-conjugating enzyme]-L-cysteine + [acceptor protein]-L-lysine = [E2 ubiquitin-conjugating enzyme]-L-cysteine + N(6)-ubiquitinyl-[acceptor protein]-L-lysine.. Its pathway is protein modification; protein ubiquitination. Functionally, E3 ubiquitin-protein ligase that plays a key role in the RNF14-RNF25 translation quality control pathway, a pathway that takes place when a ribosome has stalled during translation, and which promotes ubiquitination and degradation of translation factors on stalled ribosomes. Catalyzes ubiquitination of RPS27A in response to ribosome collisions, promoting activation of RNF14. RNF25 catalyzes ubiquitination of other ribosomal proteins on stalled ribosomes, such as RPL0, RPL1, RPL12, RPS13 and RPS17. Also involved in ubiquitination and degradation of stalled ETF1/eRF1. Independently of its function in the response to stalled ribosomes, mediates ubiquitination and subsequent proteasomal degradation of NKD2. May also stimulate transcription mediated by NF-kappa-B via its interaction with RELA/p65. The polypeptide is E3 ubiquitin-protein ligase RNF25 (Homo sapiens (Human)).